The sequence spans 292 residues: Elongation factor Ts (292 aa).

The segment at 79-82 is involved in Mg(2+) ion dislocation from EF-Tu; that stretch reads TDFV.

This sequence belongs to the EF-Ts family.

It is found in the cytoplasm. Associates with the EF-Tu.GDP complex and induces the exchange of GDP to GTP. It remains bound to the aminoacyl-tRNA.EF-Tu.GTP complex up to the GTP hydrolysis stage on the ribosome. This Xanthomonas campestris pv. campestris (strain ATCC 33913 / DSM 3586 / NCPPB 528 / LMG 568 / P 25) protein is Elongation factor Ts.